We begin with the raw amino-acid sequence, 122 residues long: Large ribosomal subunit protein uL14 (122 aa).

Belongs to the universal ribosomal protein uL14 family. Part of the 50S ribosomal subunit. Forms a cluster with proteins L3 and L19. In the 70S ribosome, L14 and L19 interact and together make contacts with the 16S rRNA in bridges B5 and B8.

Binds to 23S rRNA. Forms part of two intersubunit bridges in the 70S ribosome. In Pediococcus pentosaceus (strain ATCC 25745 / CCUG 21536 / LMG 10740 / 183-1w), this protein is Large ribosomal subunit protein uL14.